Consider the following 120-residue polypeptide: Membrane-anchored ubiquitin-fold protein 5 (120 aa).

The Ubiquitin-like domain maps to 7-72; sequence IELKFRLADG…ILENNKTLSE (66 aa). Cys115 is lipidated: S-palmitoyl cysteine. Position 117 is a cysteine methyl ester (Cys117). The S-geranylgeranyl cysteine moiety is linked to residue Cys117. The propeptide at 118-120 is removed in mature form; sequence CIL.

As to expression, ubiquitous.

Its subcellular location is the cell membrane. May serve as docking site to facilitate the association of other proteins to the plasma membrane. This is Membrane-anchored ubiquitin-fold protein 5 (MUB5) from Arabidopsis thaliana (Mouse-ear cress).